Here is a 265-residue protein sequence, read N- to C-terminus: ATP synthase subunit a (265 aa).

Helical transmembrane passes span 26-46 (VHLDTLFFSLVSGVLFLFFFY), 88-108 (IGSLALTIFCWVFVMNAIDLI), 132-152 (DISATLGMSVCVFALIIFYTI), 168-188 (PFNHWAFIPVNFLLEAVTLLA), 195-217 (FRLFGNMYAGELIFVLIAVMYMA), and 231-251 (LIWAIFHILVITLQAFIFMML).

Belongs to the ATPase A chain family. As to quaternary structure, F-type ATPases have 2 components, CF(1) - the catalytic core - and CF(0) - the membrane proton channel. CF(1) has five subunits: alpha(3), beta(3), gamma(1), delta(1), epsilon(1). CF(0) has three main subunits: a(1), b(2) and c(9-12). The alpha and beta chains form an alternating ring which encloses part of the gamma chain. CF(1) is attached to CF(0) by a central stalk formed by the gamma and epsilon chains, while a peripheral stalk is formed by the delta and b chains.

It localises to the cell inner membrane. Functionally, key component of the proton channel; it plays a direct role in the translocation of protons across the membrane. In Histophilus somni (strain 129Pt) (Haemophilus somnus), this protein is ATP synthase subunit a.